Reading from the N-terminus, the 159-residue chain is Protein HydD (159 aa).

Belongs to the peptidase A31 family.

The sequence is that of Protein HydD (hydD) from Wolinella succinogenes (strain ATCC 29543 / DSM 1740 / CCUG 13145 / JCM 31913 / LMG 7466 / NCTC 11488 / FDC 602W) (Vibrio succinogenes).